We begin with the raw amino-acid sequence, 360 residues long: Codeine O-demethylase (360 aa).

The Fe2OG dioxygenase domain occupies 211–311 (GLQTMRMNYY…RLSIATFHDS (101 aa)). Tyr220 contributes to the 2-oxoglutarate binding site. Positions 235, 237, and 292 each coordinate Fe cation. Residues Arg302 and Ser304 each coordinate 2-oxoglutarate.

The protein belongs to the iron/ascorbate-dependent oxidoreductase family. Requires L-ascorbate as cofactor. The cofactor is Fe cation. Mainly expressed in stems, capsules and leaves and, to a lower extent, in roots.

The enzyme catalyses codeine + 2-oxoglutarate + O2 = morphine + formaldehyde + succinate + CO2. The catalysed reaction is thebaine + 2-oxoglutarate + O2 = oripavine + formaldehyde + succinate + CO2. It carries out the reaction (S)-scoulerine + 2-oxoglutarate + O2 = (S)-3-O-demethylscoulerine + formaldehyde + succinate + CO2. It catalyses the reaction thebaine + 2-oxoglutarate + O2 = neopinone + formaldehyde + succinate + CO2. The enzyme catalyses (S)-reticuline + 2-oxoglutarate + O2 = (S)-6-O-demethylreticuline + formaldehyde + succinate + CO2. The catalysed reaction is (S)-tetrahydropalmatine + S-adenosyl-L-methionine = (S)-cis-N-methyltetrahydropalmatine + S-adenosyl-L-homocysteine. Its pathway is alkaloid biosynthesis; morphine biosynthesis. Moderate substrate inhibition. Not inhibited in vitro by acylcyclohexanediones. Its function is as follows. Non-heme dioxygenase involved in biosynthesis of morphinan-type benzylisoquinoline and opiate alkaloids natural products. Mediates the conversion of codeine to morphine. Also catalyzes, with lower efficiency, the 3-O-demethylation of thebaine to oripavine and of (S)-scoulerine to 3-O-demethylscoulerine. Supports, with a lower turnover, the conversion of codeinone to morphinone, of thebaine to neopinone, and of neopine to neomorphine. Supports dealkylation reactions such as O,O-demethylenation in the metabolism of protopine, benzo[c]phenanthridine, and rhoeadine alkaloids; cleaves a methylenedioxy bridge leaving two hydroxyl groups. Catalyzes the O,O-demethylenation of methylenedioxy bridges on protopine alkaloids such as allocryptopine, cryptopine and protopine. No activity with (S)-reticuline, salutaridine, papaverine, (S)-corytuberine, oripavine, pavine or noscapine. The protein is Codeine O-demethylase of Papaver somniferum (Opium poppy).